We begin with the raw amino-acid sequence, 322 residues long: ATP-dependent 6-phosphofructokinase (322 aa).

G13 lines the ATP pocket. 23–27 (RAVVR) provides a ligand contact to ADP. ATP-binding positions include 74-75 (RC) and 104-107 (GDGS). D105 contacts Mg(2+). 127–129 (TID) serves as a coordination point for substrate. D129 serves as the catalytic Proton acceptor. Residue R156 participates in ADP binding. Substrate is bound by residues R164 and 171–173 (MGR). ADP-binding positions include 187–189 (GAE) and 215–217 (KRH). Residues E224, R246, and 252–255 (HIQR) each bind substrate.

Belongs to the phosphofructokinase type A (PFKA) family. ATP-dependent PFK group I subfamily. Prokaryotic clade 'B1' sub-subfamily. Homotetramer. The cofactor is Mg(2+).

The protein resides in the cytoplasm. It catalyses the reaction beta-D-fructose 6-phosphate + ATP = beta-D-fructose 1,6-bisphosphate + ADP + H(+). The protein operates within carbohydrate degradation; glycolysis; D-glyceraldehyde 3-phosphate and glycerone phosphate from D-glucose: step 3/4. Its activity is regulated as follows. Allosterically activated by ADP and other diphosphonucleosides, and allosterically inhibited by phosphoenolpyruvate. Functionally, catalyzes the phosphorylation of D-fructose 6-phosphate to fructose 1,6-bisphosphate by ATP, the first committing step of glycolysis. The chain is ATP-dependent 6-phosphofructokinase from Paenibacillus macquariensis (Bacillus macquariensis).